We begin with the raw amino-acid sequence, 320 residues long: NADH-ubiquinone oxidoreductase chain 1 (320 aa).

8 helical membrane-spanning segments follow: residues 3–23, 72–92, 103–123, 147–167, 174–194, 226–246, 255–275, and 295–315; these read LITI…VAFL, ILLI…WTPI, LGFL…LWAG, VTLG…TMQL, HIWL…STLA, FFLA…ILFI, ELFL…FLWI, and FLPL…SISG.

It belongs to the complex I subunit 1 family.

It localises to the mitochondrion inner membrane. It catalyses the reaction a ubiquinone + NADH + 5 H(+)(in) = a ubiquinol + NAD(+) + 4 H(+)(out). Its function is as follows. Core subunit of the mitochondrial membrane respiratory chain NADH dehydrogenase (Complex I) that is believed to belong to the minimal assembly required for catalysis. Complex I functions in the transfer of electrons from NADH to the respiratory chain. The immediate electron acceptor for the enzyme is believed to be ubiquinone. In Varanus jobiensis (Peach throat monitor), this protein is NADH-ubiquinone oxidoreductase chain 1 (MT-ND1).